We begin with the raw amino-acid sequence, 663 residues long: Rho GTPase-activating protein 18 (663 aa).

2 disordered regions span residues 14–73 (AYHP…DESM) and 85–106 (RSNENRQEGQEAIVVKEPDEGE). Positions 27–37 (SHVKGGDEATS) are enriched in basic and acidic residues. Residues 38-51 (SRRYGQYTINQEGS) are compositionally biased toward polar residues. Phosphoserine is present on residues S65 and S68. A compositionally biased stretch (basic and acidic residues) spans 85-102 (RSNENRQEGQEAIVVKEP). A Phosphothreonine modification is found at T156. 2 disordered regions span residues 173 to 228 (FAQQ…PASE) and 245 to 277 (KEFSKERTQKISSNDSLPSFRLPKDKTGTTRIG). 2 stretches are compositionally biased toward basic and acidic residues: residues 178-205 (EAQEKPPDDSDLRSVRTNENKGQGKDDQ) and 212-222 (DSKEQISRVPE). A phosphoserine mark is found at S260 and S263. A Rho-GAP domain is found at 324–523 (IPLTILLEQD…LLIRYQKILW (200 aa)). At S610 the chain carries Phosphoserine.

Interacts with MPHOSPH6. As to expression, widely expressed: expressed in most organs, except small intestine.

Its subcellular location is the cytoplasm. Rho GTPase activating protein that suppresses F-actin polymerization by inhibiting Rho. Rho GTPase activating proteins act by converting Rho-type GTPases to an inactive GDP-bound state. Plays a key role in tissue tension and 3D tissue shape by regulating cortical actomyosin network formation. Acts downstream of YAP1 and inhibits actin polymerization, which in turn reduces nuclear localization of YAP1. Regulates cell shape, spreading, and migration. The protein is Rho GTPase-activating protein 18 of Mus musculus (Mouse).